Reading from the N-terminus, the 456-residue chain is Phosphomannomutase (456 aa).

Ser-98 serves as the catalytic Phosphoserine intermediate. Mg(2+)-binding residues include Ser-98, Asp-245, Asp-247, and Asp-249.

Belongs to the phosphohexose mutase family. It depends on Mg(2+) as a cofactor.

It carries out the reaction alpha-D-mannose 1-phosphate = D-mannose 6-phosphate. Its pathway is nucleotide-sugar biosynthesis; GDP-alpha-D-mannose biosynthesis; alpha-D-mannose 1-phosphate from D-fructose 6-phosphate: step 2/2. In terms of biological role, involved in the biosynthesis of the capsular polysaccharide colanic acid. The chain is Phosphomannomutase (manB) from Salmonella typhimurium (strain LT2 / SGSC1412 / ATCC 700720).